An 85-amino-acid chain; its full sequence is Large ribosomal subunit protein bL27 (85 aa).

Residues 1–21 (MAHKKGQGSTQNNRDSAGRRL) are disordered.

It belongs to the bacterial ribosomal protein bL27 family.

This chain is Large ribosomal subunit protein bL27, found in Nitratiruptor sp. (strain SB155-2).